The chain runs to 201 residues: UPF0098 protein MT1961 (201 aa).

The segment at 125 to 146 (TADGETPGGGISLPNSSGQPAY) is disordered.

The protein belongs to the UPF0098 family.

This is UPF0098 protein MT1961 from Mycobacterium tuberculosis (strain CDC 1551 / Oshkosh).